Reading from the N-terminus, the 447-residue chain is GTPase Der (447 aa).

EngA-type G domains lie at Pro3–Arg167 and Thr181–Met354. Residues Gly9–Ser16, Asp56–Phe60, Asn119–Glu122, Gly187–Ser194, Asp234–Leu238, and Asn299–Asp302 contribute to the GTP site. Residues Val355–Lys439 enclose the KH-like domain.

It belongs to the TRAFAC class TrmE-Era-EngA-EngB-Septin-like GTPase superfamily. EngA (Der) GTPase family. Associates with the 50S ribosomal subunit.

GTPase that plays an essential role in the late steps of ribosome biogenesis. This chain is GTPase Der, found in Ralstonia nicotianae (strain ATCC BAA-1114 / GMI1000) (Ralstonia solanacearum).